Here is a 241-residue protein sequence, read N- to C-terminus: Accessory protein p30II (241 aa).

Short sequence motifs (nuclear localization signal) lie at residues 73–78 (RRCRSR) and 91–98 (GPRRSRPR). The tract at residues 86–153 (AFPPGGPRRS…HRNSPTDTKL (68 aa)) is disordered. Over residues 107–138 (PSSTVSSSSLSFNSSSKDNSPSTNSSTSRSSG) the composition is skewed to low complexity. A Mitochondrial targeting signal motif is present at residues 175 to 184 (LRVWRLCTRR).

It belongs to the HTLV-1 accessory protein p30II family. P30II binds to the KIX domains of CREBBP and EP300.

It localises to the host nucleus. The protein resides in the host nucleolus. It is found in the host mitochondrion inner membrane. Its function is as follows. p30II is a multifunctional regulator that sequesters EP300/CREBBP and down-regulates CREB-responsive element (CRE) and Tax-responsive element (TRE) mediated transcription. Specifically binds and represses tax/rex mRNA nuclear export. Since Tax and Rex are positive regulators of viral gene expression, their inhibition by p30II reduces virion production, and allows the virus to escape the host immune surveillance and persist latently in an immune-competent host. P13II increases mitochondrial permeability to monovalent cations, producing a rapid, membrane potential-dependent influx of potassium. This could involve a channel-forming activity. Interferes with cell proliferation and transformation and promotes apoptosis induced by ceramide and Fas ligand, probably using the Ras signaling. In Human T-cell leukemia virus 1 (isolate Caribbea HS-35 subtype A) (HTLV-1), this protein is Accessory protein p30II.